The primary structure comprises 132 residues: Small ribosomal subunit protein uS8 (132 aa).

This sequence belongs to the universal ribosomal protein uS8 family. As to quaternary structure, part of the 30S ribosomal subunit. Contacts proteins S5 and S12.

In terms of biological role, one of the primary rRNA binding proteins, it binds directly to 16S rRNA central domain where it helps coordinate assembly of the platform of the 30S subunit. In Streptococcus agalactiae serotype V (strain ATCC BAA-611 / 2603 V/R), this protein is Small ribosomal subunit protein uS8.